The chain runs to 543 residues: CBS domain-containing protein CBSCBSPB1 (543 aa).

A disordered region spans residues 1 to 35; that stretch reads MASQGGPRRSLSVTTASLHGKKKSMDMAERGLDTG. S17 carries the post-translational modification Phosphoserine. A compositionally biased stretch (basic and acidic residues) spans 23–35; it reads KSMDMAERGLDTG. CBS domains follow at residues 59–118, 125–183, 225–285, and 293–350; these read RLSK…NVEE, MTKN…RAAE, IIPD…LPPS, and MTQN…AGTT. The interval 372 to 393 is disordered; the sequence is LSPNEDDEDSRSESSMKVASEA. Residues 402–489 form the PB1 domain; that stretch reads ANTFSFKIED…KSLRLHLDDS (88 aa). The chain crosses the membrane as a helical span at residues 518–538; sequence AYSGVAAGAALVAGLGFMAFL.

Its subcellular location is the membrane. This is CBS domain-containing protein CBSCBSPB1 (CBSCBSPB1) from Arabidopsis thaliana (Mouse-ear cress).